The chain runs to 484 residues: Falcipain-2a (484 aa).

Over 1-35 (MDYNMDYAPHEVISQQGERFVDKYVDRKILKNKKS) the chain is Cytoplasmic. The propeptide at 1-243 (MDYNMDYAPH…PLKNSKYLLD (243 aa)) is activation peptide. The short motif at 16–25 (QGERFVDKYV) is the Bipartite vacuolar targeting signal 1 element. Residues 36 to 56 (LLVIISLSVLSVVGFVLFYFT) traverse the membrane as a helical; Signal-anchor for type II membrane protein segment. Residues 57–484 (PNSRKSDLFK…GTDAFIPLIE (428 aa)) are Lumenal-facing. Residue Asn67 is glycosylated (N-linked (GlcNAc...) asparagine). The Bipartite vacuolar targeting signal 2 signature appears at 84–105 (KSPNGKKFIVSKIDEALSFYDS). A Nose motif; required for the correct folding of the mature form motif is present at residues 244 to 260 (QMNYEEVIKKYKGNENF). Cystine bridges form between Cys282–Cys323, Cys316–Cys357, Cys342–Cys362, and Cys411–Cys472. The active site involves Cys285. His417 is an active-site residue. The Arm motif; binds to host hemoglobin and required for the inhibitory interaction between the propeptide and the catalytic domain signature appears at 428–437 (EIVNPLTKKG). Asn447 is a catalytic residue.

This sequence belongs to the peptidase C1 family. As to quaternary structure, component of the hemozoin formation complex (HFC) composed of falcipains FP2A and/or FP2B, plasmepsins PMII, PMIII/HAP and PMIV, heme detoxifying protein HDP and falcilysin FLN. The HFC complex is involved in hemoglobin degradation and detoxification of heme in the food vacuole during the asexual blood stage. Auto-cleaved to remove the propeptide.

It is found in the vacuole. The protein localises to the membrane. Its activity is regulated as follows. Inhibited by cysteine protease inhibitor ICP. Inhibited by heme and heme analogs. Its function is as follows. Cysteine protease which cleaves native host hemoglobin and globin in the food vacuole during the asexual blood stage. The binding to host hemoglobin is pH-sensitive and only occurs at acidic pH. Cleaves ankyrin and protein 4.1, two components of host erythrocyte membrane cytoskeleton required for the stability of the erythrocyte membrane, and thus may be involved in parasite release. Preferentially cleaves substrates which have an arginine or lysine at the P1 position and a leucine or phenylalanine at the P2 position. The protein is Falcipain-2a of Plasmodium falciparum (isolate 3D7).